The sequence spans 187 residues: RNA pyrophosphohydrolase (187 aa).

Residues 6–149 enclose the Nudix hydrolase domain; sequence GYRANVGIIL…KRQVYRQALT (144 aa). The Nudix box motif lies at 38–59; it reads GGIKSGETPTEAMYRELAEETG. The interval 166–187 is disordered; that stretch reads AYREPLEPVEKNRKKSSDTRQS.

The protein belongs to the Nudix hydrolase family. RppH subfamily. It depends on a divalent metal cation as a cofactor.

Functionally, accelerates the degradation of transcripts by removing pyrophosphate from the 5'-end of triphosphorylated RNA, leading to a more labile monophosphorylated state that can stimulate subsequent ribonuclease cleavage. The protein is RNA pyrophosphohydrolase of Nitrosomonas europaea (strain ATCC 19718 / CIP 103999 / KCTC 2705 / NBRC 14298).